A 572-amino-acid chain; its full sequence is Isocitrate dehydrogenase kinase/phosphatase (572 aa).

ATP contacts are provided by residues 317-323 (APGVRGM) and lysine 338. Aspartate 373 is a catalytic residue.

It belongs to the AceK family.

It localises to the cytoplasm. The enzyme catalyses L-seryl-[isocitrate dehydrogenase] + ATP = O-phospho-L-seryl-[isocitrate dehydrogenase] + ADP + H(+). Functionally, bifunctional enzyme which can phosphorylate or dephosphorylate isocitrate dehydrogenase (IDH) on a specific serine residue. This is a regulatory mechanism which enables bacteria to bypass the Krebs cycle via the glyoxylate shunt in response to the source of carbon. When bacteria are grown on glucose, IDH is fully active and unphosphorylated, but when grown on acetate or ethanol, the activity of IDH declines drastically concomitant with its phosphorylation. The protein is Isocitrate dehydrogenase kinase/phosphatase of Ectopseudomonas mendocina (strain ymp) (Pseudomonas mendocina).